A 605-amino-acid chain; its full sequence is Leucine-rich repeat-containing protein 40 (605 aa).

The segment at 1–21 (MSRFKRGGKAPDPLSGFRAPK) is disordered. LRR repeat units lie at residues 83-104 (DLTK…ISLL), 106-127 (ALVV…IREL), 129-151 (NLQK…QHLQ), 152-173 (NLKS…IGHL), 175-196 (ILEE…VGQL), 198-219 (GLVK…IGKM), 221-242 (NLRQ…VAGM), 244-265 (SLEQ…PFLT), 266-287 (KLKE…HLQN), 290-311 (SLSV…ISLL), 313-335 (GLER…GSLP), 336-357 (NLKS…ILNK), 429-450 (PITT…IVEM), 453-475 (SVYD…CMLL), 476-497 (KLTH…MEAL), 499-520 (RLQS…LYTI), 522-543 (NLET…QLKK), 546-567 (KLST…LGNC), and 569-590 (SLRA…ILAK).

This chain is Leucine-rich repeat-containing protein 40 (lrrc40), found in Xenopus laevis (African clawed frog).